The primary structure comprises 708 residues: Polyribonucleotide nucleotidyltransferase (708 aa).

Residues aspartate 486 and aspartate 492 each coordinate Mg(2+). One can recognise a KH domain in the interval 553-612; it reads PRITTIKVPPQKVREVIGSGGKVIREITEVTGTKIDIEDDGTIKIASADAEATQRAVDWI. The region spanning 622-690 is the S1 motif domain; that stretch reads GVVYTGKVVK…DRGKIKLSMK (69 aa).

Belongs to the polyribonucleotide nucleotidyltransferase family. Mg(2+) is required as a cofactor.

Its subcellular location is the cytoplasm. The catalysed reaction is RNA(n+1) + phosphate = RNA(n) + a ribonucleoside 5'-diphosphate. Involved in mRNA degradation. Catalyzes the phosphorolysis of single-stranded polyribonucleotides processively in the 3'- to 5'-direction. This Rhodospirillum rubrum (strain ATCC 11170 / ATH 1.1.1 / DSM 467 / LMG 4362 / NCIMB 8255 / S1) protein is Polyribonucleotide nucleotidyltransferase.